The chain runs to 524 residues: 2-isopropylmalate synthase (524 aa).

The region spanning 5–267 is the Pyruvate carboxyltransferase domain; sequence VIIFDTTLRD…HTNIRHSEIH (263 aa). Mn(2+) is bound by residues D14, H202, H204, and N238. Residues 392–524 are regulatory domain; it reads KLEYLGVQSG…KTDKINTESV (133 aa).

It belongs to the alpha-IPM synthase/homocitrate synthase family. LeuA type 1 subfamily. Homodimer. Mn(2+) is required as a cofactor.

Its subcellular location is the cytoplasm. The enzyme catalyses 3-methyl-2-oxobutanoate + acetyl-CoA + H2O = (2S)-2-isopropylmalate + CoA + H(+). It participates in amino-acid biosynthesis; L-leucine biosynthesis; L-leucine from 3-methyl-2-oxobutanoate: step 1/4. Its function is as follows. Catalyzes the condensation of the acetyl group of acetyl-CoA with 3-methyl-2-oxobutanoate (2-ketoisovalerate) to form 3-carboxy-3-hydroxy-4-methylpentanoate (2-isopropylmalate). In Aeromonas salmonicida (strain A449), this protein is 2-isopropylmalate synthase.